Reading from the N-terminus, the 409-residue chain is MSTVQTPVQYLPAKTANSIKLVDEAQAKTNLLGMTQAQLADYFKSIGEKPFRSTQVIKWIYQQGVTDFEQMTNLSKSLRDKLSANACVIPPKVIHRQYSDDGTRKWVFEVTGGSLVETVLIPADDSKLNGRKTLCISSQVGCALDCSFCSTGKQGFERDLTAAEILGQLWVANASYMSDENDSLENIDHSLWENNVTNVVMMGMGEPLLNYRPVVSSMELMLSDHAYGLSKRRVTLSTSGVVPKMYELAKELDVALAISLHAPNDELRNELVPINKKYPLEQLMAAARNYVFDVNPRHKKHVTIEYVMLDGVNDSNEHAEQLVALLGDLPSKINLIPFNPFPHANYDKSSNNRIHAFSNILSEAGFVCTIRQTRGDDIDAACGQLVGQVADRTRRSAAWQQSIKDRENS.

Glu117 serves as the catalytic Proton acceptor. The Radical SAM core domain occupies 128–377 (LNGRKTLCIS…CTIRQTRGDD (250 aa)). Residues Cys135 and Cys382 are joined by a disulfide bond. [4Fe-4S] cluster contacts are provided by Cys142, Cys146, and Cys149. Residues 205–206 (GE), Ser237, 259–261 (SLH), and Asn339 each bind S-adenosyl-L-methionine. Cys382 functions as the S-methylcysteine intermediate in the catalytic mechanism.

The protein belongs to the radical SAM superfamily. RlmN family. It depends on [4Fe-4S] cluster as a cofactor.

It localises to the cytoplasm. The enzyme catalyses adenosine(2503) in 23S rRNA + 2 reduced [2Fe-2S]-[ferredoxin] + 2 S-adenosyl-L-methionine = 2-methyladenosine(2503) in 23S rRNA + 5'-deoxyadenosine + L-methionine + 2 oxidized [2Fe-2S]-[ferredoxin] + S-adenosyl-L-homocysteine. It carries out the reaction adenosine(37) in tRNA + 2 reduced [2Fe-2S]-[ferredoxin] + 2 S-adenosyl-L-methionine = 2-methyladenosine(37) in tRNA + 5'-deoxyadenosine + L-methionine + 2 oxidized [2Fe-2S]-[ferredoxin] + S-adenosyl-L-homocysteine. Specifically methylates position 2 of adenine 2503 in 23S rRNA and position 2 of adenine 37 in tRNAs. m2A2503 modification seems to play a crucial role in the proofreading step occurring at the peptidyl transferase center and thus would serve to optimize ribosomal fidelity. This Psychrobacter arcticus (strain DSM 17307 / VKM B-2377 / 273-4) protein is Dual-specificity RNA methyltransferase RlmN.